Consider the following 122-residue polypeptide: uncharacterized protein (122 aa).

A signal peptide spans 1–17 (MKYSSIFSMLSFFILFA).

This is an uncharacterized protein from Escherichia coli (strain K12).